The sequence spans 213 residues: Superoxide dismutase [Fe] (213 aa).

Fe cation-binding residues include His26, His73, Asp156, and His160.

The protein belongs to the iron/manganese superoxide dismutase family. In terms of assembly, homodimer. Fe cation serves as cofactor.

The catalysed reaction is 2 superoxide + 2 H(+) = H2O2 + O2. In terms of biological role, destroys superoxide anion radicals which are normally produced within the cells and which are toxic to biological systems. The sequence is that of Superoxide dismutase [Fe] (sodB) from Helicobacter pylori (strain J99 / ATCC 700824) (Campylobacter pylori J99).